A 147-amino-acid chain; its full sequence is Allograft inflammatory factor 1 (147 aa).

Ser2 carries the N-acetylserine modification. Lys11 is subject to N6-acetyllysine. A Phosphoserine modification is found at Ser39. Residues 45–80 enclose the EF-hand 1 domain; that stretch reads SKLEGFKEKYMEFDLNGNGDIDIMSLKRMLEKLGVP. Positions 58, 60, 62, 64, 100, and 105 each coordinate Ca(2+). The region spanning 81 to 115 is the EF-hand 2; degenerate domain; that stretch reads KTHLELKKLIGEVSSGSGETFSYPDFLRMMLGKRS. The interval 128-147 is disordered; the sequence is AREKEKPTGPPAKKAISELP.

In terms of assembly, homodimer (Potential). Monomer. Interacts with LCP1. In terms of processing, phosphorylated on serine residues. In terms of tissue distribution, detected in T-lymphocytes and peripheral blood mononuclear cells.

Its subcellular location is the cytoplasm. The protein resides in the cytoskeleton. It is found in the cell projection. The protein localises to the ruffle membrane. It localises to the phagocytic cup. In terms of biological role, actin-binding protein that enhances membrane ruffling and RAC activation. Enhances the actin-bundling activity of LCP1. Binds calcium. Plays a role in RAC signaling and in phagocytosis. May play a role in macrophage activation and function. Promotes the proliferation of vascular smooth muscle cells and of T-lymphocytes. Enhances lymphocyte migration. Plays a role in vascular inflammation. The chain is Allograft inflammatory factor 1 (AIF1) from Homo sapiens (Human).